The primary structure comprises 853 residues: Penicillin-binding protein 1A (853 aa).

Topologically, residues 1 to 6 (MRIAKL) are cytoplasmic. A helical; Signal-anchor for type II membrane protein transmembrane segment spans residues 7–27 (ILNTLLTLCILGLVAGGMLYF). The Periplasmic portion of the chain corresponds to 28-853 (HLKSELQQPM…TPATQPQELF (826 aa)). The interval 37 to 205 (MQIYTADGKL…STMNPLYSLK (169 aa)) is transglycosylase. Glu75 acts as the Proton donor; for transglycosylase activity in catalysis. The tract at residues 387 to 681 (QRANGEWQLG…RVISGELAFL (295 aa)) is transpeptidase. Ser441 acts as the Acyl-ester intermediate; for transpeptidase activity in catalysis. The tract at residues 615 to 636 (NALKPTDDSTNGEELDQQPETV) is disordered.

The protein in the N-terminal section; belongs to the glycosyltransferase 51 family. It in the C-terminal section; belongs to the transpeptidase family.

The protein localises to the cell inner membrane. The catalysed reaction is [GlcNAc-(1-&gt;4)-Mur2Ac(oyl-L-Ala-gamma-D-Glu-L-Lys-D-Ala-D-Ala)](n)-di-trans,octa-cis-undecaprenyl diphosphate + beta-D-GlcNAc-(1-&gt;4)-Mur2Ac(oyl-L-Ala-gamma-D-Glu-L-Lys-D-Ala-D-Ala)-di-trans,octa-cis-undecaprenyl diphosphate = [GlcNAc-(1-&gt;4)-Mur2Ac(oyl-L-Ala-gamma-D-Glu-L-Lys-D-Ala-D-Ala)](n+1)-di-trans,octa-cis-undecaprenyl diphosphate + di-trans,octa-cis-undecaprenyl diphosphate + H(+). The enzyme catalyses Preferential cleavage: (Ac)2-L-Lys-D-Ala-|-D-Ala. Also transpeptidation of peptidyl-alanyl moieties that are N-acyl substituents of D-alanine.. The protein operates within cell wall biogenesis; peptidoglycan biosynthesis. Cell wall formation. Synthesis of cross-linked peptidoglycan from the lipid intermediates. The enzyme has a penicillin-insensitive transglycosylase N-terminal domain (formation of linear glycan strands) and a penicillin-sensitive transpeptidase C-terminal domain (cross-linking of the peptide subunits). In Haemophilus influenzae (strain ATCC 51907 / DSM 11121 / KW20 / Rd), this protein is Penicillin-binding protein 1A (mrcA).